We begin with the raw amino-acid sequence, 326 residues long: Sucrose operon repressor (326 aa).

An HTH lacI-type domain is found at 1 to 57; it reads MKPKLNDVAKLAGVSATTVSRVINNHGYLSSQTKEKVFAAMRELHYQPNNMARSLQG. The H-T-H motif DNA-binding region spans 5–24; sequence LNDVAKLAGVSATTVSRVIN.

Its function is as follows. Negative regulator of scrB expression. This chain is Sucrose operon repressor (scrR), found in Pediococcus pentosaceus.